Here is a 397-residue protein sequence, read N- to C-terminus: 1-deoxy-D-xylulose 5-phosphate reductoisomerase (397 aa).

8 residues coordinate NADPH: Thr10, Gly11, Ser12, Ile13, Gly36, Lys37, Asn38, and Asn124. Lys125 is a 1-deoxy-D-xylulose 5-phosphate binding site. Glu126 contributes to the NADPH binding site. Residue Asp150 participates in Mn(2+) binding. Residues Ser151, Glu152, Ser186, and His209 each coordinate 1-deoxy-D-xylulose 5-phosphate. Residue Glu152 coordinates Mn(2+). Gly215 contributes to the NADPH binding site. Residues Ser222, Asn227, Lys228, and Glu231 each coordinate 1-deoxy-D-xylulose 5-phosphate. A Mn(2+)-binding site is contributed by Glu231.

This sequence belongs to the DXR family. As to quaternary structure, homodimer. Requires Mg(2+) as cofactor. Mn(2+) is required as a cofactor.

The catalysed reaction is 2-C-methyl-D-erythritol 4-phosphate + NADP(+) = 1-deoxy-D-xylulose 5-phosphate + NADPH + H(+). It functions in the pathway isoprenoid biosynthesis; isopentenyl diphosphate biosynthesis via DXP pathway; isopentenyl diphosphate from 1-deoxy-D-xylulose 5-phosphate: step 1/6. Its function is as follows. Catalyzes the NADPH-dependent rearrangement and reduction of 1-deoxy-D-xylulose-5-phosphate (DXP) to 2-C-methyl-D-erythritol 4-phosphate (MEP). This chain is 1-deoxy-D-xylulose 5-phosphate reductoisomerase, found in Proteus mirabilis (strain HI4320).